The primary structure comprises 455 residues: Golgi pH regulator (455 aa).

2 helical membrane-spanning segments follow: residues 5-25 and 46-66; these read IDSSIMVTSQVLFFGFGWLFF and VTFAFSCTMFELIIFEILGVL. Asparagine 67 is a glycosylation site (N-linked (GlcNAc...) asparagine). A run of 3 helical transmembrane segments spans residues 79–99, 111–131, and 150–170; these read LCVILLILVFMVPFYIGYFVV, LFACVLWLTFMYFFWKLGDPF, and VGVIGVTLMALLSGFGAVNCP. N-linked (GlcNAc...) asparagine glycans are attached at residues asparagine 180 and asparagine 243. Helical transmembrane passes span 290-310, 343-363, 378-398, and 425-445; these read GYFFSIYCVWKIFMATINIVF, ISFILVGIIIVTSIRGLLITL, VIVLLLAQIMGMYFVSSVLLI, and WFDVIFLVSALSSILFLYLAH.

This sequence belongs to the Golgi pH regulator (TC 1.A.38) family. As to quaternary structure, homotrimer.

It is found in the golgi apparatus membrane. The enzyme catalyses iodide(out) = iodide(in). It catalyses the reaction chloride(in) = chloride(out). It carries out the reaction bromide(in) = bromide(out). The catalysed reaction is fluoride(in) = fluoride(out). In terms of biological role, voltage-gated channel that enables the transfer of anions such as iodide, chloride, bromide and fluoride which may function in counter-ion conductance and participates in Golgi acidification. The protein is Golgi pH regulator of Gallus gallus (Chicken).